The following is a 67-amino-acid chain: Penaeidin-4a (67 aa).

Residues 1–19 (MRLVVCLVFLASFALVCQG) form the signal peptide. Disulfide bonds link cysteine 42–cysteine 56, cysteine 45–cysteine 63, and cysteine 57–cysteine 64. Arginine amide is present on arginine 66.

Belongs to the penaeidin family.

Its subcellular location is the cytoplasmic granule. In terms of biological role, antibacterial and antifungal activity. Presents chitin-binding activity. The chain is Penaeidin-4a from Penaeus vannamei (Whiteleg shrimp).